Reading from the N-terminus, the 338-residue chain is Cytochrome f (338 aa).

An N-terminal signal peptide occupies residues 1 to 45 (MNFKVCSFPSRRQSIAAFVRVLMVILLTLGALVSSDVLLPQPAAA). Heme-binding residues include Tyr46, Cys66, Cys69, and His70. A helical membrane pass occupies residues 300-316 (IAFLAAITLTQILLVLK).

The protein belongs to the cytochrome f family. As to quaternary structure, the 4 large subunits of the cytochrome b6-f complex are cytochrome b6, subunit IV (17 kDa polypeptide, PetD), cytochrome f and the Rieske protein, while the 4 small subunits are PetG, PetL, PetM and PetN. The complex functions as a dimer. Heme serves as cofactor.

Its subcellular location is the cellular thylakoid membrane. In terms of biological role, component of the cytochrome b6-f complex, which mediates electron transfer between photosystem II (PSII) and photosystem I (PSI), cyclic electron flow around PSI, and state transitions. In Leptolyngbya laminosa (Phormidium laminosum), this protein is Cytochrome f (petA).